Reading from the N-terminus, the 308-residue chain is Acetyl-coenzyme A carboxylase carboxyl transferase subunit beta (308 aa).

Residues 26-295 (LWIKDPETGE…EQKPLEPEIL (270 aa)) form the CoA carboxyltransferase N-terminal domain.

It belongs to the AccD/PCCB family. Acetyl-CoA carboxylase is a heterohexamer composed of biotin carboxyl carrier protein (AccB), biotin carboxylase (AccC) and two subunits each of ACCase subunit alpha (AccA) and ACCase subunit beta (AccD).

It is found in the cytoplasm. The enzyme catalyses N(6)-carboxybiotinyl-L-lysyl-[protein] + acetyl-CoA = N(6)-biotinyl-L-lysyl-[protein] + malonyl-CoA. Its pathway is lipid metabolism; malonyl-CoA biosynthesis; malonyl-CoA from acetyl-CoA: step 1/1. Functionally, component of the acetyl coenzyme A carboxylase (ACC) complex. Biotin carboxylase (BC) catalyzes the carboxylation of biotin on its carrier protein (BCCP) and then the CO(2) group is transferred by the transcarboxylase to acetyl-CoA to form malonyl-CoA. This chain is Acetyl-coenzyme A carboxylase carboxyl transferase subunit beta, found in Mesorhizobium japonicum (strain LMG 29417 / CECT 9101 / MAFF 303099) (Mesorhizobium loti (strain MAFF 303099)).